The chain runs to 118 residues: UPF0342 protein BCG9842_B4422 (118 aa).

The protein belongs to the UPF0342 family.

This is UPF0342 protein BCG9842_B4422 from Bacillus cereus (strain G9842).